Reading from the N-terminus, the 118-residue chain is MSITSLKNQKEFELINKLGKKFHERYFILVIARNLPTIFLKSQYNTFLGIKVSRKLNKKAVIRNKIKRRIRHLVRIIVSDAKLSAVKFAMIIIPRKGFEEINFSHLNYELSKIVLRNI.

Belongs to the RnpA family. As to quaternary structure, consists of a catalytic RNA component (M1 or rnpB) and a protein subunit.

It catalyses the reaction Endonucleolytic cleavage of RNA, removing 5'-extranucleotides from tRNA precursor.. Its function is as follows. RNaseP catalyzes the removal of the 5'-leader sequence from pre-tRNA to produce the mature 5'-terminus. It can also cleave other RNA substrates such as 4.5S RNA. The protein component plays an auxiliary but essential role in vivo by binding to the 5'-leader sequence and broadening the substrate specificity of the ribozyme. In Rickettsia akari (strain Hartford), this protein is Ribonuclease P protein component.